A 479-amino-acid polypeptide reads, in one-letter code: Endoglucanase 20 (479 aa).

The first 21 residues, 1–21 (MGKLLVLMLVGMFLAFESLEA), serve as a signal peptide directing secretion. An N-linked (GlcNAc...) asparagine glycan is attached at Asn-29. The active-site Nucleophile is the Asp-76. The active site involves His-398. Residue Asn-442 is glycosylated (N-linked (GlcNAc...) asparagine). Catalysis depends on residues Asp-449 and Glu-458.

The protein belongs to the glycosyl hydrolase 9 (cellulase E) family.

It is found in the secreted. The catalysed reaction is Endohydrolysis of (1-&gt;4)-beta-D-glucosidic linkages in cellulose, lichenin and cereal beta-D-glucans.. This Arabidopsis thaliana (Mouse-ear cress) protein is Endoglucanase 20.